The chain runs to 304 residues: 3-diazoavenalumate denitrifying reductase (304 aa).

This sequence belongs to the NAD(P)-dependent epimerase/dehydratase family.

It catalyses the reaction 3-diazoavenalumate + NADPH + H(+) = avenalumate + N2 + NADP(+). The enzyme catalyses 3-diazoavenalumate + NADH + H(+) = avenalumate + N2 + NAD(+). The catalysed reaction is (E)-3-diazocoumarate + NADPH = N2 + (E)-4-coumarate + NADP(+). It carries out the reaction (E)-3-diazocoumarate + NADH = N2 + (E)-4-coumarate + NAD(+). Oxidoreductase involved in the biosynthesis of avenalumic acid (AVA). Catalyzes the denitrification of 3-diazoavenalumic acid (3-DAA) to produce AVA. It can also act on 3-diazocoumaric acid (3-DCA). Can use NADPH or NADH as a reductant, with a preference for NADPH. This is 3-diazoavenalumate denitrifying reductase from Streptomyces sp.